The primary structure comprises 301 residues: Phosphatidylglycerol--prolipoprotein diacylglyceryl transferase (301 aa).

7 helical membrane-spanning segments follow: residues 17–37 (LAVRWYGLMYLVAFIMAIVVG), 59–79 (MLFYGVLGTILGGRFGYVLFY), 97–117 (GGMSFHGGFLGVTFAMILFAW), 129–149 (FVAPMVPAGLAAGRLGNFING), 203–223 (PSQLYEIALEGVVLFLVLWLF), 230–250 (VGAASAVFLIGYGLARFTVEF), and 257–277 (FLGLLALGLSMGQWLSLPMII). Arg-142 is a binding site for a 1,2-diacyl-sn-glycero-3-phospho-(1'-sn-glycerol).

This sequence belongs to the Lgt family.

The protein resides in the cell inner membrane. It catalyses the reaction L-cysteinyl-[prolipoprotein] + a 1,2-diacyl-sn-glycero-3-phospho-(1'-sn-glycerol) = an S-1,2-diacyl-sn-glyceryl-L-cysteinyl-[prolipoprotein] + sn-glycerol 1-phosphate + H(+). Its pathway is protein modification; lipoprotein biosynthesis (diacylglyceryl transfer). In terms of biological role, catalyzes the transfer of the diacylglyceryl group from phosphatidylglycerol to the sulfhydryl group of the N-terminal cysteine of a prolipoprotein, the first step in the formation of mature lipoproteins. In Paraburkholderia phymatum (strain DSM 17167 / CIP 108236 / LMG 21445 / STM815) (Burkholderia phymatum), this protein is Phosphatidylglycerol--prolipoprotein diacylglyceryl transferase.